Here is a 488-residue protein sequence, read N- to C-terminus: F-box protein At3g60790 (488 aa).

The segment at Met1–Pro21 is disordered. One can recognise an F-box domain in the interval Val49–Asp95.

This is F-box protein At3g60790 from Arabidopsis thaliana (Mouse-ear cress).